A 39-amino-acid polypeptide reads, in one-letter code: Large ribosomal subunit protein bL36 (39 aa).

It belongs to the bacterial ribosomal protein bL36 family.

This is Large ribosomal subunit protein bL36 from Limosilactobacillus reuteri (strain DSM 20016) (Lactobacillus reuteri).